Consider the following 1346-residue polypeptide: Adhesion G protein-coupled receptor F5 (1346 aa).

An N-terminal signal peptide occupies residues 1–21 (MKSPRRTTLCLMFIVIYSSKA). At 22–1006 (ALNWNYESTI…MSPDSPDPSS (985 aa)) the chain is on the extracellular side. 21 N-linked (GlcNAc...) asparagine glycosylation sites follow: asparagine 73, asparagine 94, asparagine 106, asparagine 188, asparagine 256, asparagine 272, asparagine 301, asparagine 315, asparagine 328, asparagine 398, asparagine 472, asparagine 487, asparagine 505, asparagine 540, asparagine 627, asparagine 649, asparagine 666, asparagine 820, asparagine 931, asparagine 963, and asparagine 982. Residues 166–273 (LQEDVTLNMR…NSFQAVTINE (108 aa)) form the SEA domain. Ig-like domains are found at residues 267-368 (QAVT…IDVM), 369-466 (PIQI…IKVT), and 471-561 (ANLT…KDVI). Disulfide bonds link cysteine 293–cysteine 350 and cysteine 391–cysteine 449. A disulfide bridge connects residues cysteine 492 and cysteine 545. Positions 842-1003 (PPLSFSQTNV…SILMSPDSPD (162 aa)) constitute a GAIN-B domain. Intrachain disulfides connect cysteine 954-cysteine 985 and cysteine 973-cysteine 987. The GPS stretch occupies residues 954 to 1003 (CVFWNFRLANNTGGWDSSGCYVEEGDGDNVTCICDHLTSFSILMSPDSPD). Residues 991-1006 (TSFSILMSPDSPDPSS) are tethered agonist. Residues 1007–1027 (LLGILLDIISYVGVGFSILSL) form a helical membrane-spanning segment. The Cytoplasmic portion of the chain corresponds to 1028–1053 (AACLVVEAVVWKSVTKNRTSYMRHTC). The helical transmembrane segment at 1054–1074 (IVNIAASLLVANTWFIVVAAI) threads the bilayer. Residues 1075–1090 (QDNRYILCKTACVAAT) are Extracellular-facing. The helical transmembrane segment at 1091-1111 (FFIHFFYLSVFFWMLTLGLML) threads the bilayer. The Cytoplasmic segment spans residues 1112-1128 (FYRLVFILHETSRSTQK). A helical membrane pass occupies residues 1129–1149 (AIAFCLGYGCPLAISVITLGA). Residues 1150–1173 (TQPREVYTRKNVCWLNWEDTKALL) lie on the Extracellular side of the membrane. Residues 1174-1194 (AFAIPALIIVVVNITITIVVI) form a helical membrane-spanning segment. Residues 1195–1220 (TKILRPSIGDKPCKQEKSSLFQISKS) are Cytoplasmic-facing. The helical transmembrane segment at 1221-1241 (IGVLTPLLGLTWGFGLTTVFP) threads the bilayer. Residues 1242–1244 (GTN) are Extracellular-facing. The helical transmembrane segment at 1245-1265 (LVFHIIFAILNVFQGLFILLF) threads the bilayer. At 1266–1346 (GCLWDLKVQE…NSSSASSLLN (81 aa)) the chain is on the cytoplasmic side. Threonine 1300 carries the post-translational modification Phosphothreonine. Serine 1307 carries the phosphoserine modification. The interval 1327 to 1346 (TPEATSSSLENSSSASSLLN) is disordered. Over residues 1329–1346 (EATSSSLENSSSASSLLN) the composition is skewed to low complexity.

Belongs to the G-protein coupled receptor 2 family. Adhesion G-protein coupled receptor (ADGR) subfamily. Homodimer; disulfide-linked. Heterodimer of 2 chains generated by proteolytic processing; the large extracellular N-terminal fragment and the membrane-bound C-terminal fragment predominantly remain associated and non-covalently linked. Fragment generates by the processing enzyme furin remains attached to the extracellular N-terminal fragment. Interacts (via N-terminal extracellular domain) with SFTPD. In terms of processing, highly glycosylated. Proteolytically cleaved at multiple sites: one in the GPS region of the GAIN-B domain (S1 site) and the other in the SEA domain (S2 site). The proteolytic cleavage at S1 site generates an extracellular subunit and a seven-transmembrane subunit. The proteolytic cleavage at S2 site generates a fragment that undergoes proteolytic cleavage by the processing enzyme furin. As to expression, expressed in lung endothelial cells and in alveolar type II (ATII) cells (at protein level). Expressed high levels in subcutaneous adipose tissue in lean individuals and at lower levels in visceral fat. Expression levels in subcutaneous adipose tissue drastically drop in obese individuals.

It localises to the cell membrane. As an adhesion G protein-coupled receptor (aGPCR) exhibits a large N-terminal extracellular domain containing highly conserved GPCR autoproteolysis-inducing (GAIN) domain. During synthesis, intracellular autoproteolytic processing of nascent chain within the GAIN domain generates a mature protein, consisting of an N-terminal fragment that is non-covalently linked to the C-terminal fragment. The mature protein is routed to the plasma membrane where the N- and C-terminal fragments remain associated, forming the holoreceptor. Dissociation of the aGPCR fragments stimulates G protein signaling through the action of the tethered-peptide agonist stalk that is occluded within the GAIN domain in the holoreceptor form. This dissociation might be induced by ligand binding, such as that of sFNDC4. Functionally, adhesion G protein-coupled receptor. In alveolar type II (ATII or AT2) cells, required for normal lung surfactant homeostasis. Modulation of both surfactant secretion and uptake by ATII cells is mediated by the downstream activation of GNAQ/GNA11 proteins and may be a consequence of increased cortical F-actin assembly induced by ADGRF5 activation. In the kidney, may play a role in the regulation of acid excretion into the primary urine, possibly by regulating the surface expression of V-ATPase proton pump. As a receptor for soluble FNDC4 (sFNDC4), required for proper systemic glucose tolerance, specifically sensitizing white adipose tissue to insulin. Also plays a role in sFNDC4-induced decrease of local inflammation in white adipose tissue. The protein is Adhesion G protein-coupled receptor F5 of Homo sapiens (Human).